The following is a 433-amino-acid chain: Mannan endo-1,4-beta-mannosidase 2 (433 aa).

An N-terminal signal peptide occupies residues 1–28; the sequence is MAAPTGNGPVIPILGFLTCVAFIYLSFG. An N-linked (GlcNAc...) asparagine glycan is attached at asparagine 46. Tryptophan 98 lines the substrate pocket. A glycan (N-linked (GlcNAc...) asparagine) is linked at asparagine 169. Asparagine 214 lines the substrate pocket. Glutamate 215 serves as the catalytic Proton donor. Tyrosine 295 serves as a coordination point for substrate. Glutamate 335 acts as the Nucleophile in catalysis. Tryptophan 377 provides a ligand contact to substrate.

Belongs to the glycosyl hydrolase 5 (cellulase A) family. In terms of tissue distribution, expressed in roots, stems, leaves and seeds.

It is found in the secreted. It catalyses the reaction Random hydrolysis of (1-&gt;4)-beta-D-mannosidic linkages in mannans, galactomannans and glucomannans.. The protein is Mannan endo-1,4-beta-mannosidase 2 (MAN2) of Arabidopsis thaliana (Mouse-ear cress).